The primary structure comprises 582 residues: Leucine-rich repeat protein SHOC-2 (582 aa).

2 stretches are compositionally biased toward basic and acidic residues: residues 1 to 29 (MSSSLGKEKDSKEKDPKVPSAKEREKEAK) and 36 to 57 (KESKEKEPKTKGKDAKDGKKDS). Residues 1–88 (MSSSLGKEKD…PGTRKKSSNA (88 aa)) are disordered. The short motif at 63 to 66 (GVAF) is the RVxF motif; important for interaction with PP1c element. 20 LRR repeats span residues 101–122 (NSMRLDLSKRSIHILPSSIKEL), 124–145 (QLTELYLYSNKLQSLPAEVGCL), 147–169 (NLMTLALSENSLTSLPDSLDNLK), 170–191 (KLRMLDLRHNKLREIPSVVYRL), 193–214 (SLTTLYLRFNRITTVEKDIKNL), 216–237 (KLSMLSIRENKIKQLPAEIGEL), 239–260 (NLITLDVAHNQLEHLPKEIGNC), 262–283 (QITNLDLQHNELLDLPDTIGNL), 285–307 (SLSRLGLRYNRLSAIPRSLAKCS), 308–329 (ALEELNLENNNISTLPESLLSS), 332–353 (KLNSLTLARNCFQLYPVGGPSQ), 356–377 (TIYSLNMEHNRINKIPFGIFSR), 380–400 (VLSKLNMKDNQLTSLPLDFGT), 403–424 (SMVELNLATNQLTKIPEDVSGL), 426–448 (SLEVLILSNNLLKKLPHGLGNLR), 449–470 (KLRELDLEENKLESLPNEIAYL), 472–494 (DLQKLVLTNNQLTTLPRGIGHLT), 495–516 (NLTHLGLGENLLTHLPEEIGTL), 518–540 (NLEELYLNDNPNLHSLPFELALC), and 542–563 (KLSIMSIENCPLSHLPPQIVAG).

It belongs to the SHOC2 family. In terms of assembly, component of the SHOC2-MRAS-PP1c (SMP) complex consisting of SHOC2, GTP-bound M-Ras/MRAS and the catalytic subunit of protein phosphatase 1 (either PPP1CA, PPP1CB or PPP1CC). SHOC2 and PP1c preferably bind M-Ras/MRAS, but they also bind K-Ras/KRAS, N-Ras/NRAS and H-Ras/HRAS; these interactions are GTP-dependent and both SHOC2 and PP1c are required to form a stable complex. Interacts with PP1c in the absence of Ras GTPases. Interacts with M-Ras/MRAS and RAF1. Interacts with ERBIN; disrupts the interaction with RAF1 and Ras, preventing the activation of the Ras signaling pathway. Interacts with LZTR1.

It localises to the cytoplasm. The protein resides in the nucleus. Its function is as follows. Core component of the SHOC2-MRAS-PP1c (SMP) holophosphatase complex that regulates activation of the MAPK pathway. Acts as a scaffolding protein in the SMP complex. The SMP complex specifically dephosphorylates the inhibitory phosphorylation at 'Ser-259' of RAF1 kinase, 'Ser-365' of BRAF kinase and 'Ser-214' of ARAF kinase, stimulating their kinase activities. The SMP complex enhances the dephosphorylation activity and substrate specificity of PP1c. The sequence is that of Leucine-rich repeat protein SHOC-2 (SHOC2) from Homo sapiens (Human).